A 510-amino-acid polypeptide reads, in one-letter code: Chromosomal replication initiator protein DnaA (510 aa).

The segment at 1–74 (MHTDLWERGC…EATLSELAGK (74 aa)) is domain I, interacts with DnaA modulators. A domain II region spans residues 74-173 (KPVRLELSLL…PTLSPAVSRG (100 aa)). The segment at 125–168 (ARHDPQSVVPTPGGSANGRAAPRVGEPGGPVGTSTLPVAPTLSP) is disordered. A domain III, AAA+ region region spans residues 174–390 (RLNPALTFDT…GALRKVLAYS (217 aa)). ATP-binding residues include G218, G220, K221, and T222. Residues 391 to 510 (RFSHKEISIN…LHVLEQTLKG (120 aa)) form a domain IV, binds dsDNA region.

This sequence belongs to the DnaA family. In terms of assembly, oligomerizes as a right-handed, spiral filament on DNA at oriC.

It is found in the cytoplasm. Plays an essential role in the initiation and regulation of chromosomal replication. ATP-DnaA binds to the origin of replication (oriC) to initiate formation of the DNA replication initiation complex once per cell cycle. Binds the DnaA box (a 9 base pair repeat at the origin) and separates the double-stranded (ds)DNA. Forms a right-handed helical filament on oriC DNA; dsDNA binds to the exterior of the filament while single-stranded (ss)DNA is stabiized in the filament's interior. The ATP-DnaA-oriC complex binds and stabilizes one strand of the AT-rich DNA unwinding element (DUE), permitting loading of DNA polymerase. After initiation quickly degrades to an ADP-DnaA complex that is not apt for DNA replication. Binds acidic phospholipids. This Leptothrix cholodnii (strain ATCC 51168 / LMG 8142 / SP-6) (Leptothrix discophora (strain SP-6)) protein is Chromosomal replication initiator protein DnaA.